We begin with the raw amino-acid sequence, 353 residues long: Protein RecA (353 aa).

G67–T74 lines the ATP pocket.

Belongs to the RecA family.

It is found in the cytoplasm. In terms of biological role, can catalyze the hydrolysis of ATP in the presence of single-stranded DNA, the ATP-dependent uptake of single-stranded DNA by duplex DNA, and the ATP-dependent hybridization of homologous single-stranded DNAs. It interacts with LexA causing its activation and leading to its autocatalytic cleavage. The protein is Protein RecA of Shewanella sediminis (strain HAW-EB3).